The chain runs to 267 residues: Hydroxypyruvate/pyruvate aldolase Bphyt_5830 (267 aa).

The active-site Proton acceptor is His-48. Residues Glu-152 and Asp-178 each contribute to the a divalent metal cation site.

It belongs to the HpcH/HpaI aldolase family. A divalent metal cation is required as a cofactor.

The enzyme catalyses D-glyceraldehyde + 3-hydroxypyruvate = 2-dehydro-D-galactonate. It catalyses the reaction D-glyceraldehyde + 3-hydroxypyruvate = (3R,4S,5R)-3,4,5,6-tetrahydroxy-2-oxohexanoate. It carries out the reaction D-glyceraldehyde + pyruvate = 2-dehydro-3-deoxy-L-galactonate. Aldolase which can catalyze in vitro the aldolisation reaction between hydroxypyruvate (HPA) or pyruvate (PA) and D-glyceraldehyde (D-GA). The condensation of hydroxypyruvate and D-glyceraldehyde produces 2-dehydro-D-galactonate as the major product and (3R,4S,5R)-3,4,5,6-tetrahydroxy-2-oxohexanoate. The condensation of pyruvate and D-glyceraldehyde produces 2-dehydro-3-deoxy-L-galactonate. This chain is Hydroxypyruvate/pyruvate aldolase Bphyt_5830, found in Paraburkholderia phytofirmans (strain DSM 17436 / LMG 22146 / PsJN) (Burkholderia phytofirmans).